A 240-amino-acid chain; its full sequence is ATP-dependent dethiobiotin synthetase BioD (240 aa).

Residue 12 to 17 participates in ATP binding; it reads EIGKTV. Residue threonine 16 coordinates Mg(2+). The active site involves lysine 37. A substrate-binding site is contributed by serine 41. ATP is bound by residues aspartate 54, 115-118, 179-180, and 207-209; these read EGSG, NQ, and PYI. Positions 54 and 115 each coordinate Mg(2+).

This sequence belongs to the dethiobiotin synthetase family. Homodimer. It depends on Mg(2+) as a cofactor.

The protein resides in the cytoplasm. The catalysed reaction is (7R,8S)-7,8-diammoniononanoate + CO2 + ATP = (4R,5S)-dethiobiotin + ADP + phosphate + 3 H(+). The protein operates within cofactor biosynthesis; biotin biosynthesis; biotin from 7,8-diaminononanoate: step 1/2. Functionally, catalyzes a mechanistically unusual reaction, the ATP-dependent insertion of CO2 between the N7 and N8 nitrogen atoms of 7,8-diaminopelargonic acid (DAPA, also called 7,8-diammoniononanoate) to form a ureido ring. The polypeptide is ATP-dependent dethiobiotin synthetase BioD (Clostridium acetobutylicum (strain ATCC 824 / DSM 792 / JCM 1419 / IAM 19013 / LMG 5710 / NBRC 13948 / NRRL B-527 / VKM B-1787 / 2291 / W)).